The chain runs to 279 residues: 3-methyl-2-oxobutanoate hydroxymethyltransferase (279 aa).

Mg(2+)-binding residues include Asp-44 and Asp-83. 3-methyl-2-oxobutanoate is bound by residues 44–45, Asp-83, and Lys-113; that span reads DS. Glu-115 serves as a coordination point for Mg(2+). Glu-182 serves as the catalytic Proton acceptor.

It belongs to the PanB family. As to quaternary structure, homodecamer; pentamer of dimers. The cofactor is Mg(2+).

It localises to the cytoplasm. It catalyses the reaction 3-methyl-2-oxobutanoate + (6R)-5,10-methylene-5,6,7,8-tetrahydrofolate + H2O = 2-dehydropantoate + (6S)-5,6,7,8-tetrahydrofolate. Its pathway is cofactor biosynthesis; (R)-pantothenate biosynthesis; (R)-pantoate from 3-methyl-2-oxobutanoate: step 1/2. Catalyzes the reversible reaction in which hydroxymethyl group from 5,10-methylenetetrahydrofolate is transferred onto alpha-ketoisovalerate to form ketopantoate. The sequence is that of 3-methyl-2-oxobutanoate hydroxymethyltransferase from Dehalococcoides mccartyi (strain CBDB1).